An 86-amino-acid polypeptide reads, in one-letter code: Cyclin-dependent kinase inhibitor 6 (86 aa).

The span at 1–15 (MAAAAATVTAVQPAA) shows a compositional bias: low complexity. The tract at residues 1–23 (MAAAAATVTAVQPAASSCGKRDG) is disordered.

Belongs to the CDI family. ICK/KRP subfamily.

The sequence is that of Cyclin-dependent kinase inhibitor 6 (KRP6) from Oryza sativa subsp. japonica (Rice).